The primary structure comprises 508 residues: Catalase (508 aa).

An N-terminal signal peptide occupies residues 1 to 21 (MHMSKSFLLISMGLASISVHA). Active-site residues include His-72 and Asn-145. Tyr-353 serves as a coordination point for heme. The segment covering 373-392 (PKSPVANHNQDGPSNNSTGL) has biased composition (polar residues). The segment at 373–396 (PKSPVANHNQDGPSNNSTGLGNVD) is disordered.

It belongs to the catalase family. The cofactor is heme.

Its subcellular location is the periplasm. The enzyme catalyses 2 H2O2 = O2 + 2 H2O. Decomposes hydrogen peroxide into water and oxygen; serves to protect cells from the toxic effects of hydrogen peroxide. The chain is Catalase from Vibrio vulnificus (strain YJ016).